A 421-amino-acid chain; its full sequence is UDP-N-acetylglucosamine 1-carboxyvinyltransferase (421 aa).

Phosphoenolpyruvate is bound at residue 22–23 (KN). A UDP-N-acetyl-alpha-D-glucosamine-binding site is contributed by arginine 94. Cysteine 118 functions as the Proton donor in the catalytic mechanism. Position 118 is a 2-(S-cysteinyl)pyruvic acid O-phosphothioketal (cysteine 118). Residues 123–127 (RPMDL), aspartate 308, and isoleucine 330 contribute to the UDP-N-acetyl-alpha-D-glucosamine site.

It belongs to the EPSP synthase family. MurA subfamily.

It is found in the cytoplasm. It carries out the reaction phosphoenolpyruvate + UDP-N-acetyl-alpha-D-glucosamine = UDP-N-acetyl-3-O-(1-carboxyvinyl)-alpha-D-glucosamine + phosphate. It participates in cell wall biogenesis; peptidoglycan biosynthesis. Cell wall formation. Adds enolpyruvyl to UDP-N-acetylglucosamine. This chain is UDP-N-acetylglucosamine 1-carboxyvinyltransferase, found in Ruegeria pomeroyi (strain ATCC 700808 / DSM 15171 / DSS-3) (Silicibacter pomeroyi).